Reading from the N-terminus, the 755-residue chain is Metabotropic glutamate receptor-like protein B (755 aa).

Positions 1–23 (MKNLISIILLILIFFNYSKFVKS) are cleaved as a signal peptide. Asn-16, Asn-183, and Asn-273 each carry an N-linked (GlcNAc...) asparagine glycan. The Extracellular portion of the chain corresponds to 24–385 (KNCKIAVLLS…VDYSSSMKLG (362 aa)). A helical membrane pass occupies residues 386–406 (ITITSSICIFLCIISIIIVLV). Topologically, residues 407–417 (FRTARIIKSAS) are cytoplasmic. A helical membrane pass occupies residues 418-438 (PAFLFLILMGCILIFIGCIIF). Residues 439–455 (SQSPNEGTCRARVWLLS) lie on the Extracellular side of the membrane. Residues 456-476 (IGYTIFLGSLLVKNWRIWLLF) traverse the membrane as a helical segment. At 477-492 (DNPKLKKRSITNWKLY) the chain is on the cytoplasmic side. Residues 493-513 (PWVAGILAADVLILAFWQGLG) traverse the membrane as a helical segment. The Extracellular portion of the chain corresponds to 514 to 541 (NIRSESRIGIDSLTKYQYTNVCSSNDQG). The chain crosses the membrane as a helical span at residues 542 to 562 (SIALYILLVFHGIKLLVACFI). At 563 to 578 (SFKIKVVDIDEFNESK) the chain is on the cytoplasmic side. Residues 579–599 (PIASSVYIITFCLFIVIPLMV) form a helical membrane-spanning segment. The Extracellular segment spans residues 600–607 (SPQSVTSQ). A helical transmembrane segment spans residues 608-628 (VTTICVCAIVTTLISIILLFG). Residues 629–755 (SKFYKMITQG…GEVEIDSNNL (127 aa)) are Cytoplasmic-facing. Disordered regions lie at residues 656–676 (QSLE…EENG) and 691–729 (FSSD…NIEE). A compositionally biased stretch (acidic residues) spans 694–710 (DTEDDENETQQIDEEKD).

This sequence in the N-terminal section; belongs to the BMP lipoprotein family. It in the C-terminal section; belongs to the G-protein coupled receptor 3 family. GABA-B receptor subfamily.

The protein resides in the membrane. In Dictyostelium discoideum (Social amoeba), this protein is Metabotropic glutamate receptor-like protein B (grlB).